A 159-amino-acid chain; its full sequence is Cyclic pyranopterin monophosphate synthase (159 aa).

Residues 75 to 77 (LCH) and 113 to 114 (ME) contribute to the substrate site. D128 is a catalytic residue.

It belongs to the MoaC family. In terms of assembly, homohexamer; trimer of dimers.

It catalyses the reaction (8S)-3',8-cyclo-7,8-dihydroguanosine 5'-triphosphate = cyclic pyranopterin phosphate + diphosphate. It participates in cofactor biosynthesis; molybdopterin biosynthesis. In terms of biological role, catalyzes the conversion of (8S)-3',8-cyclo-7,8-dihydroguanosine 5'-triphosphate to cyclic pyranopterin monophosphate (cPMP). This Cupriavidus necator (strain ATCC 17699 / DSM 428 / KCTC 22496 / NCIMB 10442 / H16 / Stanier 337) (Ralstonia eutropha) protein is Cyclic pyranopterin monophosphate synthase.